Consider the following 193-residue polypeptide: ATP-dependent Clp protease proteolytic subunit 1 (193 aa).

The active-site Nucleophile is the Ser99. His124 is an active-site residue.

It belongs to the peptidase S14 family. Fourteen ClpP subunits assemble into 2 heptameric rings which stack back to back to give a disk-like structure with a central cavity, resembling the structure of eukaryotic proteasomes.

It localises to the cytoplasm. The enzyme catalyses Hydrolysis of proteins to small peptides in the presence of ATP and magnesium. alpha-casein is the usual test substrate. In the absence of ATP, only oligopeptides shorter than five residues are hydrolyzed (such as succinyl-Leu-Tyr-|-NHMec, and Leu-Tyr-Leu-|-Tyr-Trp, in which cleavage of the -Tyr-|-Leu- and -Tyr-|-Trp bonds also occurs).. Its function is as follows. Cleaves peptides in various proteins in a process that requires ATP hydrolysis. Has a chymotrypsin-like activity. Plays a major role in the degradation of misfolded proteins. This chain is ATP-dependent Clp protease proteolytic subunit 1, found in Shouchella clausii (strain KSM-K16) (Alkalihalobacillus clausii).